A 428-amino-acid polypeptide reads, in one-letter code: Histidinol dehydrogenase (428 aa).

S234, Q256, and H259 together coordinate substrate. Residues Q256 and H259 each contribute to the Zn(2+) site. Catalysis depends on proton acceptor residues E323 and H324. H324, D357, E411, and H416 together coordinate substrate. D357 lines the Zn(2+) pocket. H416 lines the Zn(2+) pocket.

Belongs to the histidinol dehydrogenase family. Requires Zn(2+) as cofactor.

The enzyme catalyses L-histidinol + 2 NAD(+) + H2O = L-histidine + 2 NADH + 3 H(+). It functions in the pathway amino-acid biosynthesis; L-histidine biosynthesis; L-histidine from 5-phospho-alpha-D-ribose 1-diphosphate: step 9/9. Catalyzes the sequential NAD-dependent oxidations of L-histidinol to L-histidinaldehyde and then to L-histidine. This is Histidinol dehydrogenase from Campylobacter jejuni subsp. jejuni serotype O:2 (strain ATCC 700819 / NCTC 11168).